The primary structure comprises 211 residues: Uracil phosphoribosyltransferase (211 aa).

5-phospho-alpha-D-ribose 1-diphosphate-binding positions include arginine 78, arginine 103, and aspartate 130–serine 138. Uracil is bound by residues isoleucine 193 and glycine 198 to alanine 200. A 5-phospho-alpha-D-ribose 1-diphosphate-binding site is contributed by aspartate 199.

Belongs to the UPRTase family. The cofactor is Mg(2+).

It carries out the reaction UMP + diphosphate = 5-phospho-alpha-D-ribose 1-diphosphate + uracil. It participates in pyrimidine metabolism; UMP biosynthesis via salvage pathway; UMP from uracil: step 1/1. With respect to regulation, allosterically activated by GTP. Functionally, catalyzes the conversion of uracil and 5-phospho-alpha-D-ribose 1-diphosphate (PRPP) to UMP and diphosphate. The protein is Uracil phosphoribosyltransferase of Acinetobacter baumannii (strain ATCC 17978 / DSM 105126 / CIP 53.77 / LMG 1025 / NCDC KC755 / 5377).